Consider the following 414-residue polypeptide: S-adenosylmethionine synthase (414 aa).

Residue H11 coordinates ATP. D13 serves as a coordination point for Mg(2+). Residue E39 coordinates K(+). L-methionine is bound by residues E52 and Q95. The tract at residues 95 to 105 (QSPDIAQGVNL) is flexible loop. Residues 169–171 (DGK), 245–246 (KF), D254, 260–261 (RK), A277, and K281 each bind ATP. D254 lines the L-methionine pocket. K285 contributes to the L-methionine binding site.

This sequence belongs to the AdoMet synthase family. As to quaternary structure, homotetramer; dimer of dimers. Mg(2+) is required as a cofactor. The cofactor is K(+).

Its subcellular location is the cytoplasm. The catalysed reaction is L-methionine + ATP + H2O = S-adenosyl-L-methionine + phosphate + diphosphate. It functions in the pathway amino-acid biosynthesis; S-adenosyl-L-methionine biosynthesis; S-adenosyl-L-methionine from L-methionine: step 1/1. Functionally, catalyzes the formation of S-adenosylmethionine (AdoMet) from methionine and ATP. The overall synthetic reaction is composed of two sequential steps, AdoMet formation and the subsequent tripolyphosphate hydrolysis which occurs prior to release of AdoMet from the enzyme. In Synechococcus sp. (strain JA-3-3Ab) (Cyanobacteria bacterium Yellowstone A-Prime), this protein is S-adenosylmethionine synthase.